The sequence spans 176 residues: Shikimate kinase (176 aa).

14 to 19 (GAGKST) serves as a coordination point for ATP. S18 is a Mg(2+) binding site. Residues D36, R60, and G83 each coordinate substrate. ATP is bound at residue R121. R140 provides a ligand contact to substrate.

The protein belongs to the shikimate kinase family. Monomer. It depends on Mg(2+) as a cofactor.

The protein resides in the cytoplasm. The enzyme catalyses shikimate + ATP = 3-phosphoshikimate + ADP + H(+). It functions in the pathway metabolic intermediate biosynthesis; chorismate biosynthesis; chorismate from D-erythrose 4-phosphate and phosphoenolpyruvate: step 5/7. Catalyzes the specific phosphorylation of the 3-hydroxyl group of shikimic acid using ATP as a cosubstrate. The chain is Shikimate kinase from Francisella tularensis subsp. tularensis (strain FSC 198).